The sequence spans 743 residues: Tudor domain-containing protein 3 (743 aa).

The segment at 241-262 (KTFGGGGGGARSNLNIGAAGHR) is disordered. Residues 286-326 (LVDEKALKHITEMGFSKEASRQALMDNANNLEAALNVLLNS) enclose the UBA domain. Disordered stretches follow at residues 327 to 365 (SKQK…APST) and 380 to 549 (EEPK…CYER). Residue Ser349 is modified to Phosphoserine. Residues 414–431 (PRNDTRQPRNERPPRFQK) show a composition bias toward basic and acidic residues. Residues 432–445 (DTPTSKSTVENSVL) are compositionally biased toward polar residues. Ser438 carries the post-translational modification Phosphoserine. Composition is skewed to basic and acidic residues over residues 464–484 (AEER…KDAS) and 536–549 (RENQ…CYER). A Glycyl lysine isopeptide (Lys-Gly) (interchain with G-Cter in SUMO2) cross-link involves residue Lys563. Residues 572–603 (TDYPRPVQSNSLGVPNGETAPPLKGRRVGPIK) are disordered. The Tudor domain maps to 647-707 (VWKPGDECFA…KPVQTEAWEE (61 aa)). Over residues 711–725 (YDHTIEFRRGGDGQP) the composition is skewed to basic and acidic residues. The tract at residues 711–743 (YDHTIEFRRGGDGQPRRSTRPTQQFYQPPRARN) is disordered. The tract at residues 723-743 (GQPRRSTRPTQQFYQPPRARN) is EBM motif; may mediate interaction with the EJC.

As to quaternary structure, component of mRNA stress granules. Interacts with FMR1, FXR1, FXR2, EWSR1, FUS, SERBP1, EEF1A1 and DDX3X or DDX3Y, and with the small nuclear ribonucleoprotein-associated proteins SNRPB and SNRPN. Interacts with 'Lys-48'-linked tetra-ubiquitin, but not with monoubiquitin or 'Lys-63'-linked ubiquitin chains. May interact with the exon junction complex (EJC) composed at least of CASC3, EIF4A3, MAGOH and RBM8A. Interacts with POLR2A (via the C-terminal domain (CTD)).

The protein localises to the cytoplasm. It is found in the nucleus. In terms of biological role, scaffolding protein that specifically recognizes and binds dimethylarginine-containing proteins. Plays a role in the regulation of translation of target mRNAs by binding Arg/Gly-rich motifs (GAR) in dimethylarginine-containing proteins. In nucleus, acts as a coactivator: recognizes and binds asymmetric dimethylation on the core histone tails associated with transcriptional activation (H3R17me2a and H4R3me2a) and recruits proteins at these arginine-methylated loci. In cytoplasm, acts as an antiviral factor that participates in the assembly of stress granules together with G3BP1. In Mus musculus (Mouse), this protein is Tudor domain-containing protein 3 (Tdrd3).